Consider the following 181-residue polypeptide: Copper-resistant cuproprotein CopI (181 aa).

A signal peptide spans 1–24 (MFPRRLLPASLIVLGVLFGASAQA). 4 residues coordinate Cu(2+): histidine 79, cysteine 163, histidine 168, and methionine 173.

Belongs to the CopI family.

The protein resides in the periplasm. Involved in copper tolerance. This Pseudomonas aeruginosa (strain ATCC 15692 / DSM 22644 / CIP 104116 / JCM 14847 / LMG 12228 / 1C / PRS 101 / PAO1) protein is Copper-resistant cuproprotein CopI.